We begin with the raw amino-acid sequence, 177 residues long: ATP synthase subunit delta (177 aa).

This sequence belongs to the ATPase delta chain family. In terms of assembly, F-type ATPases have 2 components, F(1) - the catalytic core - and F(0) - the membrane proton channel. F(1) has five subunits: alpha(3), beta(3), gamma(1), delta(1), epsilon(1). F(0) has three main subunits: a(1), b(2) and c(10-14). The alpha and beta chains form an alternating ring which encloses part of the gamma chain. F(1) is attached to F(0) by a central stalk formed by the gamma and epsilon chains, while a peripheral stalk is formed by the delta and b chains.

The protein localises to the cell inner membrane. Functionally, f(1)F(0) ATP synthase produces ATP from ADP in the presence of a proton or sodium gradient. F-type ATPases consist of two structural domains, F(1) containing the extramembraneous catalytic core and F(0) containing the membrane proton channel, linked together by a central stalk and a peripheral stalk. During catalysis, ATP synthesis in the catalytic domain of F(1) is coupled via a rotary mechanism of the central stalk subunits to proton translocation. In terms of biological role, this protein is part of the stalk that links CF(0) to CF(1). It either transmits conformational changes from CF(0) to CF(1) or is implicated in proton conduction. This is ATP synthase subunit delta from Shewanella amazonensis (strain ATCC BAA-1098 / SB2B).